Reading from the N-terminus, the 578-residue chain is Keratin, type II cytoskeletal 1b (578 aa).

Residues 1 to 163 (MSHQFSSQSA…DPEIQRIKTQ (163 aa)) form a head region. Arg-95 is modified (omega-N-methylarginine). Residues 164 to 200 (EREQIMVLNNKFASFIDKVRFLEQQNQVLQTKWELLQ) are coil 1A. The 314-residue stretch at 164-477 (EREQIMVLNN…QLLEGEESRM (314 aa)) folds into the IF rod domain. A linker 1 region spans residues 201 to 219 (QVNTSTGTNNLEPLLENYI). A coil 1B region spans residues 220–311 (GDLRRQVDLL…LFLTELSQVQ (92 aa)). The tract at residues 312 to 335 (THISDTNVILSMDNNRSLDLDSII) is linker 12. Residues 336-474 (DAVRTQYELI…TYRQLLEGEE (139 aa)) form a coil 2 region. Residues 475–578 (SRMSGELQSH…TNTSHRRILE (104 aa)) are tail. Arg-523 carries the post-translational modification Omega-N-methylarginine. The segment covering 547-556 (GSYGGSGRSG) has biased composition (gly residues). A disordered region spans residues 547–578 (GSYGGSGRSGRGSSRVQIIQTSTNTSHRRILE). Positions 562–571 (VQIIQTSTNT) are enriched in polar residues.

This sequence belongs to the intermediate filament family. In terms of processing, undergoes deimination of some arginine residues (citrullination). In terms of tissue distribution, expressed exclusively in skin.

The chain is Keratin, type II cytoskeletal 1b (KRT77) from Homo sapiens (Human).